A 260-amino-acid polypeptide reads, in one-letter code: Acetylglutamate kinase (260 aa).

Substrate contacts are provided by residues 41–42, R63, and N157; that span reads GG.

Belongs to the acetylglutamate kinase family. ArgB subfamily.

The protein localises to the cytoplasm. The enzyme catalyses N-acetyl-L-glutamate + ATP = N-acetyl-L-glutamyl 5-phosphate + ADP. It functions in the pathway amino-acid biosynthesis; L-arginine biosynthesis; N(2)-acetyl-L-ornithine from L-glutamate: step 2/4. Catalyzes the ATP-dependent phosphorylation of N-acetyl-L-glutamate. This chain is Acetylglutamate kinase, found in Acidobacterium capsulatum (strain ATCC 51196 / DSM 11244 / BCRC 80197 / JCM 7670 / NBRC 15755 / NCIMB 13165 / 161).